Consider the following 153-residue polypeptide: 6,7-dimethyl-8-ribityllumazine synthase (153 aa).

5-amino-6-(D-ribitylamino)uracil-binding positions include F22, 56–58, and 80–82; these read AFE and TVI. A (2S)-2-hydroxy-3-oxobutyl phosphate-binding site is contributed by 85-86; that stretch reads ST. The Proton donor role is filled by H88. A 5-amino-6-(D-ribitylamino)uracil-binding site is contributed by F113. Position 127 (R127) interacts with (2S)-2-hydroxy-3-oxobutyl phosphate.

The protein belongs to the DMRL synthase family. In terms of assembly, forms an icosahedral capsid composed of 60 subunits, arranged as a dodecamer of pentamers.

The catalysed reaction is (2S)-2-hydroxy-3-oxobutyl phosphate + 5-amino-6-(D-ribitylamino)uracil = 6,7-dimethyl-8-(1-D-ribityl)lumazine + phosphate + 2 H2O + H(+). It participates in cofactor biosynthesis; riboflavin biosynthesis; riboflavin from 2-hydroxy-3-oxobutyl phosphate and 5-amino-6-(D-ribitylamino)uracil: step 1/2. Functionally, catalyzes the formation of 6,7-dimethyl-8-ribityllumazine by condensation of 5-amino-6-(D-ribitylamino)uracil with 3,4-dihydroxy-2-butanone 4-phosphate. This is the penultimate step in the biosynthesis of riboflavin. The polypeptide is 6,7-dimethyl-8-ribityllumazine synthase (Actinobacillus pleuropneumoniae serotype 7 (strain AP76)).